The following is a 475-amino-acid chain: MYPCTLLMVLLCLAIMTHGHIQIHGTGMRRNRRDSPHPPSPIYDSFYVPKKGWDETKPGTVLASRNIQAGFTKTQKINLDGAYQLLYRTSGVDDKSPSYSVTTVLVPKNARPNKLVLIMAYEDSNFVECAPSYKIQLGAPLETNPIQTVEELMWTSVLNDGWTVTIPDHQGPLSAFSSSFIHGHASLDAIRATLNFEQLKLDPKSAVVGMGYSGGAIAGGWAASLLGSYATELNVVGWSIGGTPSNVTGTFYGLDGSLFSGFSVAGVAGIVDSYPEVNDYVGSVITPAGNAALQFTREHCMGDIVVGLQNVNLTGKDFVKNEKNFLTDKRIAPILDHLTMGTDSKLTPKVPVYMYHALHDEVIPFDRANQTANAWCKGGANLLFQEYTGIEMGHVSTEVLNTPFVLKFIRDRMSGREFLNGCQWKSDLNPLWRPDILGARLTEVFNSILNFFGTSVGRTDRIIQESIINHNFTSK.

The signal sequence occupies residues 1–19 (MYPCTLLMVLLCLAIMTHG). A disulfide bond links cysteine 129 and cysteine 300. The active-site Nucleophile is the serine 213. N-linked (GlcNAc...) asparagine glycosylation is found at asparagine 246 and asparagine 312. The active site involves aspartate 360. Residue asparagine 369 is glycosylated (N-linked (GlcNAc...) asparagine). Histidine 394 is an active-site residue. N-linked (GlcNAc...) asparagine glycosylation is present at asparagine 471.

The protein belongs to the AB hydrolase superfamily. Lipase family. Class Lip subfamily.

It carries out the reaction a triacylglycerol + H2O = a diacylglycerol + a fatty acid + H(+). The enzyme catalyses a monoacylglycerol + H2O = glycerol + a fatty acid + H(+). It catalyses the reaction a diacylglycerol + H2O = a monoacylglycerol + a fatty acid + H(+). Functionally, secreted lipase involved in Dandruff and seborrheic dermatitis (D/SD) probably via lipase-mediated breakdown of sebaceous lipids and release of irritating free fatty acids. Has triacylglycerol lipase activity and is able to hydrolyze triolein. Mostly converts monoolein to di- and triolein, while free fatty acids are only produced in low amounts. This is Secreted triacylglycerol lipase LIP5 from Malassezia globosa (strain ATCC MYA-4612 / CBS 7966) (Dandruff-associated fungus).